Here is a 287-residue protein sequence, read N- to C-terminus: Heavy metal-associated isoprenylated plant protein 4 (287 aa).

HMA domains are found at residues 14–80 (IITA…VELI) and 112–176 (IRTT…KHAE). Residues C25, C28, C123, and C126 each coordinate a metal cation. Residues 179 to 235 (SSKTEEEKKKEEEDKKKKEEEDKKKKEDEKKKEEEKKKEEENKKKEGEKKKEEVKVE) adopt a coiled-coil conformation. The disordered stretch occupies residues 181–232 (KTEEEKKKEEEDKKKKEEEDKKKKEDEKKKEEEKKKEEENKKKEGEKKKEEV). C284 is subject to Cysteine methyl ester. The S-farnesyl cysteine moiety is linked to residue C284. Residues 285–287 (RIV) constitute a propeptide, removed in mature form.

The protein belongs to the HIPP family.

In terms of biological role, heavy-metal-binding protein. In Arabidopsis thaliana (Mouse-ear cress), this protein is Heavy metal-associated isoprenylated plant protein 4.